Here is a 521-residue protein sequence, read N- to C-terminus: Cytochrome P450 1A1 (521 aa).

Position 229 (Phe-229) interacts with substrate. A heme-binding site is contributed by Cys-463.

It belongs to the cytochrome P450 family. It depends on heme as a cofactor.

The protein resides in the endoplasmic reticulum membrane. It is found in the microsome membrane. The enzyme catalyses an organic molecule + reduced [NADPH--hemoprotein reductase] + O2 = an alcohol + oxidized [NADPH--hemoprotein reductase] + H2O + H(+). Its function is as follows. Cytochromes P450 are a group of heme-thiolate monooxygenases. They oxidize a variety of structurally unrelated compounds, including steroids, fatty acids, and xenobiotics. The sequence is that of Cytochrome P450 1A1 (cyp1a1) from Pleuronectes platessa (European plaice).